Here is a 434-residue protein sequence, read N- to C-terminus: ATP-dependent protease ATPase subunit HslU (434 aa).

Residues valine 18, 60–65 (GVGKTE), aspartate 247, glutamate 312, and arginine 384 each bind ATP.

This sequence belongs to the ClpX chaperone family. HslU subfamily. As to quaternary structure, a double ring-shaped homohexamer of HslV is capped on each side by a ring-shaped HslU homohexamer. The assembly of the HslU/HslV complex is dependent on binding of ATP.

Its subcellular location is the cytoplasm. Its function is as follows. ATPase subunit of a proteasome-like degradation complex; this subunit has chaperone activity. The binding of ATP and its subsequent hydrolysis by HslU are essential for unfolding of protein substrates subsequently hydrolyzed by HslV. HslU recognizes the N-terminal part of its protein substrates and unfolds these before they are guided to HslV for hydrolysis. This is ATP-dependent protease ATPase subunit HslU from Hyphomonas neptunium (strain ATCC 15444).